Here is a 914-residue protein sequence, read N- to C-terminus: MLEEEYQLDYFKEQGFTRKICKSCGSAFWTRDSSREDCGDAPCVPYSFIGSPVFAPHTVDEMREAFLSFFEKNGHTRIERYPVAARWRDDIYLTIASIADFQPFVTAGVVPPPANPLTISQPCIRLNDLDSVGRSGRHLTTFEMLAHHAFNTPTEEIYWKDRTVELCDQFLASIGGDLNKVTYKEHPWIGGGNAGPSVEVMIGGLEVATLVFMSLGRQKTSHPGYDLNGEKYYPMKLRIVDTGYGLERLVWASKGSPTIYDAVFPDMVSRVMSSAGISHLLENKDYTKILAMNARFAGLMDISGSNLFNLRKKVAAAIEISPEKLDRMITPIEKVYAIVDHTRCLAYMLGDCIVPSNVREGYLARLVIRRTLRMMNEFKMQDTLADLIEEQMKIIGMDKFQQDIAVVREIVDREVEKYAITLDRGTRIVQKVAKSYKAKSQRVPLAEIITLYDSHGIPPEMIKDIAAKEGAVIDLPDNFYSQIADMHSESKKEAAPDKTAGYAERVSALPPTKKLYYEQPGDTEFEAVVIDFFDEYAVLDQTLFYPEGGGQPADTGSLVGSDSMARVDDVIKVGEVILHHISGGVLQRGERVKGMIDEERRFSLMRHHTATHILLHAAKAVLGVHIHQSGAQKGPESSRIDIRHFKHITPDELRKIEIEANRMVMANRPVEISIENRTKAEQEYGFALYQGGVPPGKDLRIVKVAGDIEACAGTHCRSTGEIGAIKILRVEHIQDGIERIEFAAGTAAVYYMQHLEQIAASSADVLSVQLENLPPTVTRFFSEWKDQKKEIERMSQRLVELEIQAIQPESIGGIPVVVKRIDLAPRELSSIATSLSEKGGVALLATPGETARIVLASGDARVNAGDIIGQLCSLLGGKGGGKPQMAQGGGPEVDKLDLALNVGRERIIAALQKK.

Histidine 608, histidine 612, cysteine 711, and histidine 715 together coordinate Zn(2+).

This sequence belongs to the class-II aminoacyl-tRNA synthetase family. Zn(2+) is required as a cofactor.

It is found in the cytoplasm. The catalysed reaction is tRNA(Ala) + L-alanine + ATP = L-alanyl-tRNA(Ala) + AMP + diphosphate. Functionally, catalyzes the attachment of alanine to tRNA(Ala) in a two-step reaction: alanine is first activated by ATP to form Ala-AMP and then transferred to the acceptor end of tRNA(Ala). Also edits incorrectly charged Ser-tRNA(Ala) and Gly-tRNA(Ala) via its editing domain. The chain is Alanine--tRNA ligase from Methanoregula boonei (strain DSM 21154 / JCM 14090 / 6A8).